A 229-amino-acid chain; its full sequence is Cytidylate kinase (229 aa).

12 to 20 (GPSGSGKGT) provides a ligand contact to ATP.

This sequence belongs to the cytidylate kinase family. Type 1 subfamily.

The protein resides in the cytoplasm. The catalysed reaction is CMP + ATP = CDP + ADP. It catalyses the reaction dCMP + ATP = dCDP + ADP. The sequence is that of Cytidylate kinase from Pseudomonas syringae pv. tomato (strain ATCC BAA-871 / DC3000).